Consider the following 134-residue polypeptide: Complexin-1 (134 aa).

Disordered stretches follow at residues 1 to 60 (MEFV…AERE) and 74 to 113 (KKEE…EEED). Residues 15 to 60 (DMGKMLGGDEEKDPDAAKKEEERQEALRQAEEERKAKYAKMEAERE) are compositionally biased toward basic and acidic residues. A coiled-coil region spans residues 29–69 (DAAKKEEERQEALRQAEEERKAKYAKMEAEREAVRQGIRDK). Residues 48–70 (RKAKYAKMEAEREAVRQGIRDKY) form an interaction with the SNARE complex region.

It belongs to the complexin/synaphin family. Binds to the SNARE core complex containing SNAP25, VAMP2 and STX1A. Nervous system. In hippocampus and cerebellum, expressed mainly by inhibitory neurons. Overexpressed in substantia nigra from patients with Parkinson disease.

Its subcellular location is the cytoplasm. It is found in the cytosol. The protein resides in the perikaryon. It localises to the presynapse. Functionally, positively regulates a late step in exocytosis of various cytoplasmic vesicles, such as synaptic vesicles and other secretory vesicles. Organizes the SNAREs into a cross-linked zigzag topology that, when interposed between the vesicle and plasma membranes, is incompatible with fusion, thereby preventing SNAREs from releasing neurotransmitters until an action potential arrives at the synapse. Also involved in glucose-induced secretion of insulin by pancreatic beta-cells. Essential for motor behavior. This Homo sapiens (Human) protein is Complexin-1 (CPLX1).